Consider the following 483-residue polypeptide: UDP-N-acetylmuramate--L-alanine ligase (483 aa).

Position 112 to 118 (112 to 118 (GTHGKTT)) interacts with ATP.

It belongs to the MurCDEF family.

It localises to the cytoplasm. The enzyme catalyses UDP-N-acetyl-alpha-D-muramate + L-alanine + ATP = UDP-N-acetyl-alpha-D-muramoyl-L-alanine + ADP + phosphate + H(+). It functions in the pathway cell wall biogenesis; peptidoglycan biosynthesis. Functionally, cell wall formation. The polypeptide is UDP-N-acetylmuramate--L-alanine ligase (Ralstonia pickettii (strain 12J)).